A 357-amino-acid polypeptide reads, in one-letter code: Glutamyl endopeptidase (357 aa).

The first 29 residues, 1–29, serve as a signal peptide directing secretion; the sequence is MKGKFLKVSSLFVATLTTATLVSSPAANA. A propeptide spanning residues 30–68 is cleaved from the precursor; the sequence is LSSKAMDNHPQQTQTDKQQTPKIQKGGNLKPLEQRERAN. Residues 33-58 form a disordered region; the sequence is KAMDNHPQQTQTDKQQTPKIQKGGNL. The span at 40–54 shows a compositional bias: low complexity; the sequence is QQTQTDKQQTPKIQK. Catalysis depends on charge relay system residues His-119, Asp-161, and Ser-237. Residues 282–357 are disordered; that stretch reads NFANDDHPNN…NNNSDNPDAA (76 aa). A run of 18 repeats spans residues 289–291, 292–294, 295–297, 298–300, 301–303, 304–306, 307–309, 310–312, 313–315, 316–318, 319–321, 322–324, 325–327, 328–330, 331–333, 337–339, 340–342, and 343–345. The segment at 289–345 is 18 X 3 AA repeats of P-[DN]-N; that stretch reads PNNPDNPDNPNNPDNPNNPDNPNNPDNPDNPNNPDNPNNPDNPNNPDQPNNPNNPDN. The span at 291 to 357 shows a compositional bias: low complexity; that stretch reads NPDNPDNPNN…NNNSDNPDAA (67 aa).

This sequence belongs to the peptidase S1B family. In terms of processing, proteolytically cleaved by aureolysin (aur). This cleavage leads to the activation of SspA.

The protein resides in the secreted. It catalyses the reaction Preferential cleavage: Glu-|-Xaa, Asp-|-Xaa.. Preferentially cleaves peptide bonds on the carboxyl-terminal side of aspartate and glutamate. Along with other extracellular proteases it is involved in colonization and infection of human tissues. Required for proteolytic maturation of thiol protease SspB and inactivation of SspC, an inhibitor of SspB. It is the most important protease for degradation of fibronectin-binding protein (FnBP) and surface protein A, which are involved in adherence to host cells. May also protect bacteria against host defense mechanism by cleaving the immunoglobulin classes IgG, IgA and IgM. May be involved in the stability of secreted lipases. The chain is Glutamyl endopeptidase (sspA) from Staphylococcus aureus (strain MRSA252).